A 363-amino-acid polypeptide reads, in one-letter code: 5-formaminoimidazole-4-carboxamide-1-(beta)-D-ribofuranosyl 5'-monophosphate synthetase (363 aa).

Residues H29 and S96 each contribute to the 5-amino-1-(5-phospho-beta-D-ribosyl)imidazole-4-carboxamide site. The 233-residue stretch at 118-350 folds into the ATP-grasp domain; that stretch reads RDILRWESER…MGRRVAREIR (233 aa). Residues 148-210 and E232 each bind ATP; that span reads PEEI…TNFC. N260 contributes to the 5-amino-1-(5-phospho-beta-D-ribosyl)imidazole-4-carboxamide binding site. Positions 299 and 312 each coordinate Mg(2+).

The protein belongs to the phosphohexose mutase family. Requires Mg(2+) as cofactor. Mn(2+) serves as cofactor.

It catalyses the reaction 5-amino-1-(5-phospho-beta-D-ribosyl)imidazole-4-carboxamide + formate + ATP = 5-formamido-1-(5-phospho-D-ribosyl)imidazole-4-carboxamide + ADP + phosphate. Its pathway is purine metabolism; IMP biosynthesis via de novo pathway; 5-formamido-1-(5-phospho-D-ribosyl)imidazole-4-carboxamide from 5-amino-1-(5-phospho-D-ribosyl)imidazole-4-carboxamide (formate route): step 1/1. Catalyzes the ATP- and formate-dependent formylation of 5-aminoimidazole-4-carboxamide-1-beta-d-ribofuranosyl 5'-monophosphate (AICAR) to 5-formaminoimidazole-4-carboxamide-1-beta-d-ribofuranosyl 5'-monophosphate (FAICAR) in the absence of folates. This is 5-formaminoimidazole-4-carboxamide-1-(beta)-D-ribofuranosyl 5'-monophosphate synthetase from Methanothermobacter thermautotrophicus (strain ATCC 29096 / DSM 1053 / JCM 10044 / NBRC 100330 / Delta H) (Methanobacterium thermoautotrophicum).